Here is a 125-residue protein sequence, read N- to C-terminus: MKYGEKEIQEFDINAEENFWPNEHEKNYTINIELPEFMCLCPRSGYPDFAIMKLSYVPDKKVIELKALKLYINSFMYRHISHENSANEIFDALYSQLEPKSMKLIADFNPRGNVHTVIEIDSETF.

Catalysis depends on cysteine 41, which acts as the Thioimide intermediate. Residue aspartate 48 is the Proton donor of the active site. Substrate-binding positions include 63–65 and 82–83; these read IEL and HE.

This sequence belongs to the GTP cyclohydrolase I family. QueF type 1 subfamily.

The protein resides in the cytoplasm. It carries out the reaction 7-aminomethyl-7-carbaguanine + 2 NADP(+) = 7-cyano-7-deazaguanine + 2 NADPH + 3 H(+). Its pathway is tRNA modification; tRNA-queuosine biosynthesis. Its function is as follows. Catalyzes the NADPH-dependent reduction of 7-cyano-7-deazaguanine (preQ0) to 7-aminomethyl-7-deazaguanine (preQ1). The polypeptide is NADPH-dependent 7-cyano-7-deazaguanine reductase (Sulfurovum sp. (strain NBC37-1)).